Reading from the N-terminus, the 151-residue chain is Large ribosomal subunit protein bL9 (151 aa).

This sequence belongs to the bacterial ribosomal protein bL9 family.

In terms of biological role, binds to the 23S rRNA. This is Large ribosomal subunit protein bL9 from Bordetella avium (strain 197N).